We begin with the raw amino-acid sequence, 416 residues long: Thyroid hormone receptor alpha (416 aa).

The interval 1–30 (MEPISNVEDPNSSEGDEKRWPDGPKRKRKN) is disordered. Residues 1 to 58 (MEPISNVEDPNSSEGDEKRWPDGPKRKRKNSTCSVKSMSALSLSVQGYIPSYLEKDEP) form a modulating region. Positions 15 to 24 (GDEKRWPDGP) are enriched in basic and acidic residues. Zn(2+)-binding residues include Cys59, Cys62, Cys76, Cys79, Cys97, Cys103, Cys113, and Cys116. 2 consecutive NR C4-type zinc fingers follow at residues 59–79 (CVVC…CEGC) and 97–121 (CKYD…FRKC). A DNA-binding region (nuclear receptor) is located at residues 59–133 (CVVCGDKATG…VCMAMDLVLD (75 aa)). The 245-residue stretch at 169–413 (SEWELIRHVT…PPLFLEVFED (245 aa)) folds into the NR LBD domain. 3,3',5-triiodo-L-thyronine is bound by residues Arg234 and Ser283.

Belongs to the nuclear hormone receptor family. NR1 subfamily.

It is found in the nucleus. In terms of biological role, nuclear hormone receptor that can act as a repressor or activator of transcription. High affinity receptor for thyroid hormones, including triiodothyronine and thyroxine. This is Thyroid hormone receptor alpha (thra1) from Salmo salar (Atlantic salmon).